We begin with the raw amino-acid sequence, 353 residues long: Tectonin-2 (353 aa).

A Ricin B-type lectin domain is found at 44-93; that stretch reads WIFDNDGYIRLAANHNLVLDVNGGAAKEGNTVLSYPDKKDHAKNQLWVNK. 6 tandem repeats follow at residues 138-173, 174-210, 211-247, 248-282, 283-318, and 319-353. Positions 138–353 are 6 X approximate tandem repeats; the sequence is SAWERHEGEL…SAHNIYKALL (216 aa).

This sequence belongs to the tectonin family.

It is found in the cell surface. Its subcellular location is the cytoplasmic vesicle membrane. Probably involved in bacterial recognition. May be a lectin that function as part of a transmembrane signaling complex during phagocytosis. This is Tectonin-2 (TECB) from Physarum polycephalum (Slime mold).